A 479-amino-acid chain; its full sequence is Sulfate adenylyltransferase subunit 1 (479 aa).

Positions 25-239 constitute a tr-type G domain; sequence KSLLRFLTCG…EVLETVDIQR (215 aa). Residues 34–41 form a G1 region; it reads GSVDDGKS. 34–41 serves as a coordination point for GTP; sequence GSVDDGKS. Residues 92 to 96 form a G2 region; sequence GITID. Residues 113–116 form a G3 region; that stretch reads DTPG. GTP contacts are provided by residues 113-117 and 168-171; these read DTPGH and NKMD. The tract at residues 168–171 is G4; the sequence is NKMD. Residues 206–208 form a G5 region; that stretch reads SAL.

This sequence belongs to the TRAFAC class translation factor GTPase superfamily. Classic translation factor GTPase family. CysN/NodQ subfamily. In terms of assembly, heterodimer composed of CysD, the smaller subunit, and CysN.

It catalyses the reaction sulfate + ATP + H(+) = adenosine 5'-phosphosulfate + diphosphate. It participates in sulfur metabolism; hydrogen sulfide biosynthesis; sulfite from sulfate: step 1/3. With CysD forms the ATP sulfurylase (ATPS) that catalyzes the adenylation of sulfate producing adenosine 5'-phosphosulfate (APS) and diphosphate, the first enzymatic step in sulfur assimilation pathway. APS synthesis involves the formation of a high-energy phosphoric-sulfuric acid anhydride bond driven by GTP hydrolysis by CysN coupled to ATP hydrolysis by CysD. The protein is Sulfate adenylyltransferase subunit 1 of Salmonella gallinarum (strain 287/91 / NCTC 13346).